The chain runs to 489 residues: Betaine aldehyde dehydrogenase (489 aa).

Positions 26 and 93 each coordinate K(+). Position 150-152 (G150–W152) interacts with NAD(+). The active-site Charge relay system is K162. Position 176–179 (K176–E179) interacts with NAD(+). Residue I180 coordinates K(+). G229–T232 contacts NAD(+). L245 contributes to the K(+) binding site. E251 (proton acceptor) is an active-site residue. NAD(+) contacts are provided by G253, C285, and E386. The Nucleophile role is filled by C285. C285 is modified (cysteine sulfenic acid (-SOH)). Positions 456 and 459 each coordinate K(+). E463 functions as the Charge relay system in the catalytic mechanism.

It belongs to the aldehyde dehydrogenase family. Dimer of dimers. K(+) serves as cofactor.

It carries out the reaction betaine aldehyde + NAD(+) + H2O = glycine betaine + NADH + 2 H(+). It participates in amine and polyamine biosynthesis; betaine biosynthesis via choline pathway; betaine from betaine aldehyde: step 1/1. Its function is as follows. Involved in the biosynthesis of the osmoprotectant glycine betaine. Catalyzes the irreversible oxidation of betaine aldehyde to the corresponding acid. The polypeptide is Betaine aldehyde dehydrogenase (Paraburkholderia phytofirmans (strain DSM 17436 / LMG 22146 / PsJN) (Burkholderia phytofirmans)).